Consider the following 440-residue polypeptide: MPVKTPSPGDLEPIEKASQDELRALQLERLKWSVRHAYENVPHYRKAFDAKGVHPDDLKSLADLAKFPFTAKGDLRDNYPFGMFAVPREKVARVHASSGTTGKPTVVGYTLKDIDTWATVVARSIRASGGRAGDMVHIAYGYGLFTGGLGAHYGAEKLGCTVVPMSGGQTEKQIQLIQDFKPDIIMVTPSYMLTVLDEMERMGIDPHQTSLKVGIFGAEPWTQAMRAAMEARAGIDAVDIYGLSEVMGPGVANECIEAKDGPVIWEDHFYPEIIDPHTGEVLPDGSEGELVFTTLTKEAMPVIRYRTRDLTRLLPPTARSMRRMAKITGRSDDMLIIRGVNLFPTQVEELICKNPKLAPQYLLEVDKDGHMDTLTVKVEINPEANVGRHPEQKEALAKELQHDIKTFIGVSAKVHVCEPFAIERVTIGKAKRVVDRRPKE.

It belongs to the phenylacetyl-CoA ligase family. As to quaternary structure, monomer.

The enzyme catalyses 2-phenylacetate + ATP + CoA = phenylacetyl-CoA + AMP + diphosphate. The protein operates within aromatic compound metabolism; phenylacetate degradation. Inhibition of activity is observed in the presence of a 1 mM of the divalent cations zinc, copper, and nickel. Its function is as follows. Catalyzes the activation of phenylacetic acid (PA) to phenylacetyl-CoA (PA-CoA). Involved in the phenylalanine metabolism. The polypeptide is Phenylacetate-coenzyme A ligase (paaK) (Aromatoleum evansii (Azoarcus evansii)).